A 454-amino-acid chain; its full sequence is UDP-N-acetylmuramoylalanine--D-glutamate ligase (454 aa).

115-121 (GTNGKTT) serves as a coordination point for ATP.

It belongs to the MurCDEF family.

The protein localises to the cytoplasm. The catalysed reaction is UDP-N-acetyl-alpha-D-muramoyl-L-alanine + D-glutamate + ATP = UDP-N-acetyl-alpha-D-muramoyl-L-alanyl-D-glutamate + ADP + phosphate + H(+). It functions in the pathway cell wall biogenesis; peptidoglycan biosynthesis. In terms of biological role, cell wall formation. Catalyzes the addition of glutamate to the nucleotide precursor UDP-N-acetylmuramoyl-L-alanine (UMA). The sequence is that of UDP-N-acetylmuramoylalanine--D-glutamate ligase from Thermoanaerobacter sp. (strain X514).